Reading from the N-terminus, the 117-residue chain is Ribonuclease P protein component (117 aa).

This sequence belongs to the RnpA family. In terms of assembly, consists of a catalytic RNA component (M1 or rnpB) and a protein subunit.

The enzyme catalyses Endonucleolytic cleavage of RNA, removing 5'-extranucleotides from tRNA precursor.. Its function is as follows. RNaseP catalyzes the removal of the 5'-leader sequence from pre-tRNA to produce the mature 5'-terminus. It can also cleave other RNA substrates such as 4.5S RNA. The protein component plays an auxiliary but essential role in vivo by binding to the 5'-leader sequence and broadening the substrate specificity of the ribozyme. In Thermotoga sp. (strain RQ2), this protein is Ribonuclease P protein component.